A 192-amino-acid polypeptide reads, in one-letter code: Ras-like GTP-binding protein Rho1 (192 aa).

12–19 provides a ligand contact to GTP; sequence GDGACGKT. Residues 34-42 carry the Effector region motif; the sequence is YVPTVFENY. Residues 59-63 and 117-120 contribute to the GTP site; these read DTAGQ and NKKD. Position 189 is a cysteine methyl ester (Cys189). A lipid anchor (S-geranylgeranyl cysteine) is attached at Cys189. The propeptide at 190-192 is removed in mature form; it reads LLL.

The protein belongs to the small GTPase superfamily. Rho family. In terms of assembly, interacts with capu. Interacts (via REM repeats) with Pkn (via N-terminus). Interacts (via N-terminus) with wash (via N-terminus). May interact with dia/diaphanous (via CBD/FH3 domain). As to expression, expressed in hemocytes (at protein level).

It localises to the cell membrane. Its subcellular location is the cytoplasm. The protein resides in the cytoskeleton. The protein localises to the apical cell membrane. It is found in the lateral cell membrane. In terms of biological role, has a role in regulating actin cytoskeletal organization: required during early development for proper execution of morphogenetic movements of individual cells and groups of cells important for the formation of the embryonic body plan. Plays a role in regulating dorsal closure during embryogenesis. During axis elongation, required for Rho-kinase Rok planar polarity and adherens junction localization as well as for generating a planar polarized distribution of the actin-binding protein Shrm. During embryogenesis, acts upstream of wash to regulate the developmental migration of tail hemocytes anteriorly along the ventral midline. May have a role in eye development. Involved in targeted recruitment of dia/diaphanous to apical membranes of polarized epithelial cells. This is Ras-like GTP-binding protein Rho1 from Drosophila melanogaster (Fruit fly).